Here is a 182-residue protein sequence, read N- to C-terminus: Large ribosomal subunit protein uL6 (182 aa).

This sequence belongs to the universal ribosomal protein uL6 family. In terms of assembly, part of the 50S ribosomal subunit.

Functionally, this protein binds to the 23S rRNA, and is important in its secondary structure. It is located near the subunit interface in the base of the L7/L12 stalk, and near the tRNA binding site of the peptidyltransferase center. This Karelsulcia muelleri (strain GWSS) (Sulcia muelleri) protein is Large ribosomal subunit protein uL6.